A 207-amino-acid polypeptide reads, in one-letter code: CASP-like protein F16 (207 aa).

Residues 1 to 30 (MEKSEKGNGVAPATRSPMALMGSSRNENQE) form a disordered region. Residues 1 to 37 (MEKSEKGNGVAPATRSPMALMGSSRNENQEVNTSMRT) are Cytoplasmic-facing. A helical transmembrane segment spans residues 38–58 (AETMLRLVPMALGVAALVVML). The Extracellular segment spans residues 59-79 (KNSQSNDFGSVSYSDLGAFRY). A helical membrane pass occupies residues 80-100 (LVHANGICAGYSLLSAIIAAV). Residues 101–108 (PSPSTMPR) lie on the Cytoplasmic side of the membrane. Residues 109 to 129 (AWTFFLLDQILTYVILGAAAV) traverse the membrane as a helical segment. The Extracellular segment spans residues 130–159 (STEVLYLANKGDSAITWSAACGTFAGFCHK). Residues 160–180 (ATIAVVITFVAVICYAVLSLV) form a helical membrane-spanning segment. Topologically, residues 181-207 (SSYRLFTKFDAPVNYPSKTIEATVFHG) are cytoplasmic.

It belongs to the Casparian strip membrane proteins (CASP) family. Homodimer and heterodimers.

It localises to the cell membrane. This is CASP-like protein F16 (F16) from Gossypium hirsutum (Upland cotton).